The primary structure comprises 140 residues: Large ribosomal subunit protein uL11 (140 aa).

This sequence belongs to the universal ribosomal protein uL11 family. As to quaternary structure, part of the ribosomal stalk of the 50S ribosomal subunit. Interacts with L10 and the large rRNA to form the base of the stalk. L10 forms an elongated spine to which L12 dimers bind in a sequential fashion forming a multimeric L10(L12)X complex. Post-translationally, one or more lysine residues are methylated.

Functionally, forms part of the ribosomal stalk which helps the ribosome interact with GTP-bound translation factors. In Desulfovibrio desulfuricans (strain ATCC 27774 / DSM 6949 / MB), this protein is Large ribosomal subunit protein uL11.